A 622-amino-acid chain; its full sequence is Iron transport multicopper oxidase FET5 (622 aa).

Positions 1-18 are cleaved as a signal peptide; it reads MLFYSFVWSVLAASVALA. Topologically, residues 19 to 573 are extracellular; the sequence is KTHKLNYTAS…PKGFTTEGYL (555 aa). N-linked (GlcNAc...) asparagine glycosylation is present at Asn-24. 2 consecutive Plastocyanin-like domains span residues 43–146 and 192–301; these read IGFN…FIIH and NILF…IQMR. The Cu cation site is built by His-79 and His-81. Asn-86 and Asn-115 each carry an N-linked (GlcNAc...) asparagine glycan. His-128 and His-130 together coordinate Cu cation. N-linked (GlcNAc...) asparagine glycans are attached at residues Asn-196, Asn-200, Asn-246, Asn-295, and Asn-364. The Plastocyanin-like 3 domain occupies 392-514; that stretch reads GDNINAQLLK…QGLASVFIEA (123 aa). The Cu cation site is built by His-418, His-421, and His-423. N-linked (GlcNAc...) asparagine glycosylation is present at Asn-455. The Cu cation site is built by His-496, Cys-497, His-498, and His-502. A helical transmembrane segment spans residues 574–594; it reads ALIISTIIGVWGLYSIAQYGI. Residues 595–622 lie on the Cytoplasmic side of the membrane; sequence GEVIPNDEKVYHTLREILAENEIEVSRG.

This sequence belongs to the multicopper oxidase family. As to quaternary structure, interacts with FTH1. The cofactor is Cu cation.

The protein localises to the cell membrane. Iron transport multicopper oxidase, which is required for Fe(2+) high affinity uptake. May be required to oxidize Fe(2+) and release it from the transporter. Essential component of copper-dependent iron transport. The sequence is that of Iron transport multicopper oxidase FET5 (FET5) from Saccharomyces cerevisiae (strain ATCC 204508 / S288c) (Baker's yeast).